Reading from the N-terminus, the 330-residue chain is 4-hydroxythreonine-4-phosphate dehydrogenase (330 aa).

Thr133 is a substrate binding site. Residues His161, His206, and His261 each contribute to the a divalent metal cation site. Substrate contacts are provided by Lys269, Asn278, and Arg287.

The protein belongs to the PdxA family. Homodimer. Requires Zn(2+) as cofactor. Mg(2+) serves as cofactor. It depends on Co(2+) as a cofactor.

It is found in the cytoplasm. The catalysed reaction is 4-(phosphooxy)-L-threonine + NAD(+) = 3-amino-2-oxopropyl phosphate + CO2 + NADH. It functions in the pathway cofactor biosynthesis; pyridoxine 5'-phosphate biosynthesis; pyridoxine 5'-phosphate from D-erythrose 4-phosphate: step 4/5. Functionally, catalyzes the NAD(P)-dependent oxidation of 4-(phosphooxy)-L-threonine (HTP) into 2-amino-3-oxo-4-(phosphooxy)butyric acid which spontaneously decarboxylates to form 3-amino-2-oxopropyl phosphate (AHAP). This is 4-hydroxythreonine-4-phosphate dehydrogenase from Xylella fastidiosa (strain Temecula1 / ATCC 700964).